Reading from the N-terminus, the 352-residue chain is MGSQEDIPVGIIGASGYGGVQLTRLLLEHPHVHLAYLGGDSSAGRPFADLYPHLGFKQDLKVEAIDLDKVVERTQVVFLALPNGLAAEMAPTLVECGCKVLDLSADYRFTNLDTYEDWYGTKRQDRDLASTAVYGLPELYRQGISTASLVGCPGCFPTASLLALAPLLKQGLIDPNSAIIDAKTGTSGGGRQAKTHLLLAEANGSIGPYGVAHHRHTPEIEQVSSDLAGREVVVQFTPHLAPMTRGILATVYATMRDPGLVREDLITIFSAFYRNSPWVKVLPGSTYPFTKWAYGTNLCYLGIEVDQRTGRVIVISAIDNLMKGQAGQAVQCLNLMMGWPETMGLPELTFYP.

The active site involves Cys-155.

The protein belongs to the NAGSA dehydrogenase family. Type 1 subfamily.

It is found in the cytoplasm. It catalyses the reaction N-acetyl-L-glutamate 5-semialdehyde + phosphate + NADP(+) = N-acetyl-L-glutamyl 5-phosphate + NADPH + H(+). It functions in the pathway amino-acid biosynthesis; L-arginine biosynthesis; N(2)-acetyl-L-ornithine from L-glutamate: step 3/4. In terms of biological role, catalyzes the NADPH-dependent reduction of N-acetyl-5-glutamyl phosphate to yield N-acetyl-L-glutamate 5-semialdehyde. The protein is N-acetyl-gamma-glutamyl-phosphate reductase of Acaryochloris marina (strain MBIC 11017).